We begin with the raw amino-acid sequence, 232 residues long: uncharacterized protein (232 aa).

Residues 1–46 (MNAHNMRGPPGDLAKVVPGSRSGWNEGSRCRQADKGDGQCRNGGRD) form a disordered region. Residues 28-46 (SRCRQADKGDGQCRNGGRD) show a composition bias toward basic and acidic residues.

This is an uncharacterized protein from Rhizobium meliloti (Ensifer meliloti).